A 1816-amino-acid chain; its full sequence is uncharacterized protein (1816 aa).

Disordered stretches follow at residues 338–357 (DSSSSSSNNNNNNNNNNNNN) and 562–605 (ELEK…IKPK). A compositionally biased stretch (low complexity) spans 339-357 (SSSSSSNNNNNNNNNNNNN). A compositionally biased stretch (basic and acidic residues) spans 562–577 (ELEKERIKKEKEDSKK). Positions 581–603 (KQSSSSSSSSTTTTSTTTSSTIK) are enriched in low complexity. Positions 826–999 (LDIVDKRESA…FLKKIDPNRK (174 aa)) constitute a Helicase ATP-binding domain. 839-846 (ASTSSGKT) is an ATP binding site. The DEAH box signature appears at 949–952 (DEVH). The region spanning 1198–1379 (QLDLVIERFQ…SVVSPSLCLS (182 aa)) is the Helicase C-terminal domain. The interval 1388 to 1487 (TNGSANKSNE…TTTKTPTTTS (100 aa)) is disordered. A compositionally biased stretch (basic and acidic residues) spans 1395-1427 (SNEENKVQVKENEKEREKEKEKEKEKEKEKETI). Positions 1445 to 1454 (NWDDDEEETA) are enriched in acidic residues. Positions 1456–1487 (STKTTPATTPTTTTTENTPATTTTTKTPTTTS) are enriched in low complexity.

This sequence belongs to the helicase family. SKI2 subfamily.

It is found in the nucleus. This is an uncharacterized protein from Dictyostelium discoideum (Social amoeba).